We begin with the raw amino-acid sequence, 442 residues long: Histidinol dehydrogenase (442 aa).

The interval 1–20 is disordered; that stretch reads MLNVTDLRGQTPSKSDIRRA. The NAD(+) site is built by Tyr129, Gln193, and Asn218. Substrate-binding residues include Thr241, Gln263, and His266. Zn(2+) contacts are provided by Gln263 and His266. Catalysis depends on proton acceptor residues Glu332 and His333. Substrate-binding residues include His333, Asp366, Glu420, and His425. Asp366 contributes to the Zn(2+) binding site. His425 serves as a coordination point for Zn(2+).

It belongs to the histidinol dehydrogenase family. Requires Zn(2+) as cofactor.

The enzyme catalyses L-histidinol + 2 NAD(+) + H2O = L-histidine + 2 NADH + 3 H(+). It functions in the pathway amino-acid biosynthesis; L-histidine biosynthesis; L-histidine from 5-phospho-alpha-D-ribose 1-diphosphate: step 9/9. In terms of biological role, catalyzes the sequential NAD-dependent oxidations of L-histidinol to L-histidinaldehyde and then to L-histidine. The sequence is that of Histidinol dehydrogenase from Corynebacterium glutamicum (strain ATCC 13032 / DSM 20300 / JCM 1318 / BCRC 11384 / CCUG 27702 / LMG 3730 / NBRC 12168 / NCIMB 10025 / NRRL B-2784 / 534).